Consider the following 418-residue polypeptide: MDIKDYMQNLGCRARKVSRVLARAGAEEKNQALEMAASFIEKESQALVEANHKDLAAGRSKGLDEALLDRLTLTEARIAVMAEGLRQIASLPDPVGAISELSYRPSGIQVGRMRVPLGVIGIIYESRPNVTADAAGLCLKSGNAVILRGGSEAFHSNQAIACCIHQGLEQAGLPQEAVQVVETTDRLAVGALITQEEHVDVIIPRGGRSLIERISQEAKIPVIKHLDGICHVYIDDRADLDKAVAIAVNAKCQRYGVCNAMETLLVAREIAAEILPMMGEHYCSAGVELRGCPETQGLLPHIEPATEEDWYTEYLAPLLAIRIVAGLDEAIEHITHYGSHHTETIVTEDFTRARRFLTEVDSSSVMVNASTRFADGFEYGLGAEIGISTDKLHARGPVGLEGLTSQKWIVLGNGHIRE.

This sequence belongs to the gamma-glutamyl phosphate reductase family.

It localises to the cytoplasm. It catalyses the reaction L-glutamate 5-semialdehyde + phosphate + NADP(+) = L-glutamyl 5-phosphate + NADPH + H(+). The protein operates within amino-acid biosynthesis; L-proline biosynthesis; L-glutamate 5-semialdehyde from L-glutamate: step 2/2. Its function is as follows. Catalyzes the NADPH-dependent reduction of L-glutamate 5-phosphate into L-glutamate 5-semialdehyde and phosphate. The product spontaneously undergoes cyclization to form 1-pyrroline-5-carboxylate. The chain is Gamma-glutamyl phosphate reductase from Nitrosococcus oceani (strain ATCC 19707 / BCRC 17464 / JCM 30415 / NCIMB 11848 / C-107).